Consider the following 432-residue polypeptide: Adenylosuccinate synthetase (432 aa).

Residues 13-19 (GDEGKGK) and 41-43 (GHT) each bind GTP. The active-site Proton acceptor is Asp14. Positions 14 and 41 each coordinate Mg(2+). IMP-binding positions include 14–17 (DEGK), 39–42 (NAGH), Thr130, Arg144, Gln225, Thr240, and Arg304. His42 (proton donor) is an active-site residue. 300-306 (ATTGRRR) lines the substrate pocket. GTP-binding positions include Arg306, 332-334 (KLD), and 415-417 (STG).

This sequence belongs to the adenylosuccinate synthetase family. As to quaternary structure, homodimer. Requires Mg(2+) as cofactor.

The protein resides in the cytoplasm. It catalyses the reaction IMP + L-aspartate + GTP = N(6)-(1,2-dicarboxyethyl)-AMP + GDP + phosphate + 2 H(+). It functions in the pathway purine metabolism; AMP biosynthesis via de novo pathway; AMP from IMP: step 1/2. Functionally, plays an important role in the de novo pathway of purine nucleotide biosynthesis. Catalyzes the first committed step in the biosynthesis of AMP from IMP. The polypeptide is Adenylosuccinate synthetase (Salmonella agona (strain SL483)).